The primary structure comprises 229 residues: UPF0758 protein GSU0386 (229 aa).

The MPN domain occupies 107-229 (RFTSPEQVYN…FTSFVSAGLL (123 aa)). Residues histidine 178, histidine 180, and aspartate 191 each coordinate Zn(2+). The JAMM motif motif lies at 178-191 (HNHPTGDPAPSRED).

The protein belongs to the UPF0758 family.

The sequence is that of UPF0758 protein GSU0386 from Geobacter sulfurreducens (strain ATCC 51573 / DSM 12127 / PCA).